Reading from the N-terminus, the 229-residue chain is 2,3-bisphosphoglycerate-dependent phosphoglycerate mutase (229 aa).

Substrate is bound by residues 7–14 (RHGQSEWN), 20–21 (TG), Arg59, 86–89 (ERHY), Lys97, 113–114 (RR), and 182–183 (GN). His8 acts as the Tele-phosphohistidine intermediate in catalysis. The Proton donor/acceptor role is filled by Glu86.

This sequence belongs to the phosphoglycerate mutase family. BPG-dependent PGAM subfamily.

The catalysed reaction is (2R)-2-phosphoglycerate = (2R)-3-phosphoglycerate. Its pathway is carbohydrate degradation; glycolysis; pyruvate from D-glyceraldehyde 3-phosphate: step 3/5. Its function is as follows. Catalyzes the interconversion of 2-phosphoglycerate and 3-phosphoglycerate. The sequence is that of 2,3-bisphosphoglycerate-dependent phosphoglycerate mutase from Listeria monocytogenes serotype 4a (strain HCC23).